Reading from the N-terminus, the 691-residue chain is Serotransferrin-2 (691 aa).

Positions 1-18 (MKLLLLSALLGCLATAYA) are cleaved as a signal peptide. 2 consecutive Transferrin-like domains span residues 25 to 329 (VKWC…SLKK) and 340 to 670 (IKWC…SLRK). An intrachain disulfide couples cysteine 28 to cysteine 50. The Fe(3+) site is built by aspartate 74 and tyrosine 104. Cystine bridges form between cysteine 127–cysteine 207, cysteine 172–cysteine 186, and cysteine 235–cysteine 249. Residues threonine 129, serine 134, glycine 136, and tryptophan 137 each contribute to the hydrogencarbonate site. The N-linked (GlcNAc...) asparagine glycan is linked to asparagine 169. Tyrosine 201 is a Fe(3+) binding site. Histidine 257 serves as a coordination point for Fe(3+). 2 disulfides stabilise this stretch: cysteine 343-cysteine 379 and cysteine 353-cysteine 370. Residues aspartate 394 and tyrosine 428 each coordinate Fe(3+). Disulfide bonds link cysteine 404/cysteine 682, cysteine 419/cysteine 643, cysteine 451/cysteine 530, cysteine 475/cysteine 671, cysteine 485/cysteine 499, cysteine 496/cysteine 513, and cysteine 570/cysteine 584. Threonine 453, arginine 457, alanine 459, and glycine 460 together coordinate hydrogencarbonate. Tyrosine 524 serves as a coordination point for Fe(3+). A Fe(3+)-binding site is contributed by histidine 592.

Belongs to the transferrin family. Monomer. As to expression, abundant in liver and serum with smaller amounts found in the stomach and kidney.

The protein localises to the secreted. In terms of biological role, transferrins are iron binding transport proteins which can bind two Fe(3+) ions in association with the binding of an anion, usually bicarbonate. It is responsible for the transport of iron from sites of absorption and heme degradation to those of storage and utilization. Serum transferrin may also have a further role in stimulating cell proliferation. The protein is Serotransferrin-2 (tf2) of Salmo salar (Atlantic salmon).